We begin with the raw amino-acid sequence, 278 residues long: Large ribosomal subunit protein uL2 (278 aa).

The interval 225–278 (MNPVDHPHGGGEGRTSGGRHPVTPWGKPTKGKKTRANKATDKYIVRSRHQKKKG) is disordered. The span at 269 to 278 (VRSRHQKKKG) shows a compositional bias: basic residues.

The protein belongs to the universal ribosomal protein uL2 family. Part of the 50S ribosomal subunit. Forms a bridge to the 30S subunit in the 70S ribosome.

Its function is as follows. One of the primary rRNA binding proteins. Required for association of the 30S and 50S subunits to form the 70S ribosome, for tRNA binding and peptide bond formation. It has been suggested to have peptidyltransferase activity; this is somewhat controversial. Makes several contacts with the 16S rRNA in the 70S ribosome. The protein is Large ribosomal subunit protein uL2 of Parvibaculum lavamentivorans (strain DS-1 / DSM 13023 / NCIMB 13966).